The chain runs to 772 residues: Mitochondrial intermediate peptidase (772 aa).

Residues 1–33 (MLARPSTTVLARRPFFRFRGCLNEPRPTKARCL) constitute a mitochondrion transit peptide. A Zn(2+)-binding site is contributed by His-556. Glu-557 is a catalytic residue. Zn(2+) contacts are provided by His-560 and His-563.

Belongs to the peptidase M3 family. The cofactor is Zn(2+).

It localises to the mitochondrion matrix. The enzyme catalyses Release of an N-terminal octapeptide as second stage of processing of some proteins imported into the mitochondrion.. In terms of biological role, cleaves proteins, imported into the mitochondrion, to their mature size. While most mitochondrial precursor proteins are processed to the mature form in one step by mitochondrial processing peptidase (MPP), the sequential cleavage by MIP of an octapeptide after initial processing by MPP is a required step for a subgroup of nuclear-encoded precursor proteins destined for the matrix or the inner membrane. In Coprinopsis scobicola (Ink cap fungus), this protein is Mitochondrial intermediate peptidase (OCT1).